Consider the following 70-residue polypeptide: MTTNIVGKVKWFNPTKNFGFIEQENGGKDVFVHRSAVDAAGLAGLNEGQDVIFDLEDKNGKISAVNLRIK.

Residues 7-67 (GKVKWFNPTK…KNGKISAVNL (61 aa)) form the CSD domain.

It is found in the cytoplasm. In Rickettsia bellii (strain RML369-C), this protein is Cold shock-like protein CspA (cspA).